Consider the following 203-residue polypeptide: Thymidylate kinase (203 aa).

14–21 (GGEGIGKS) provides a ligand contact to ATP.

The protein belongs to the thymidylate kinase family.

It catalyses the reaction dTMP + ATP = dTDP + ADP. Functionally, phosphorylation of dTMP to form dTDP in both de novo and salvage pathways of dTTP synthesis. The protein is Thymidylate kinase of Rickettsia africae (strain ESF-5).